Consider the following 413-residue polypeptide: Serine hydroxymethyltransferase (413 aa).

(6S)-5,6,7,8-tetrahydrofolate is bound by residues Leu119 and 123–125 (GHL). An N6-(pyridoxal phosphate)lysine modification is found at Lys228. Residue Glu243 coordinates (6S)-5,6,7,8-tetrahydrofolate.

The protein belongs to the SHMT family. Homodimer. Pyridoxal 5'-phosphate serves as cofactor.

The protein resides in the cytoplasm. The catalysed reaction is (6R)-5,10-methylene-5,6,7,8-tetrahydrofolate + glycine + H2O = (6S)-5,6,7,8-tetrahydrofolate + L-serine. It functions in the pathway one-carbon metabolism; tetrahydrofolate interconversion. The protein operates within amino-acid biosynthesis; glycine biosynthesis; glycine from L-serine: step 1/1. In terms of biological role, catalyzes the reversible interconversion of serine and glycine with tetrahydrofolate (THF) serving as the one-carbon carrier. This reaction serves as the major source of one-carbon groups required for the biosynthesis of purines, thymidylate, methionine, and other important biomolecules. Also exhibits THF-independent aldolase activity toward beta-hydroxyamino acids, producing glycine and aldehydes, via a retro-aldol mechanism. This is Serine hydroxymethyltransferase from Thermoanaerobacter pseudethanolicus (strain ATCC 33223 / 39E) (Clostridium thermohydrosulfuricum).